The chain runs to 896 residues: MPFSCFVFSQFLRFLRPEFFLGDVSPQGSLISREFSLGPTASLAVLWDERFLDGFLSSARLCLLLDDARRLGRTSRREKSFVLSSRGDESVRSPQGRQVHSPGFAPAVDNETASVASHISRAPRVSSKLHCSCTLRPVFFSALSRLSDFVVSSLLLCVSCSFASSALRSLPRVFSSRLSRAMPRSKKRGGAAKPPSAFSSLVSEMKEIPSPRSRSPSDPDSSSRPCASFLRSCEESLREEAATAATTVPQLSAASSSCCSRSNSSSMQTAEGRVVASPDLAEEEGVSPSRRVHSSQKRGNAGVHERRAEATCCAPRDRHGGDRPASSASFLTCDGSSRELRMQSLLPDATGGRPVAAAAHLAPCCRVPPSDASTPRSRLGQEGLERELASFPEVDEHWPHRLAETHSACSRGHRNPRAVQRHSVGDCGLRGGDTRGCCSGAEKARRESCCEADRTTEAGEGRETGTQRARRKLVMASMVCCVFMFVEIVAGVLANSLALMTDASHLLSDLCAFLISLFALWVSELKGNPSMSFGYHRAEILGALLSVFLIWVLTAVLIYAACFRLVDPPQVDGELMFWTALLGTLANLFMTHILKVHSHGIGQVHAHSCCGEETFEPLRNLQASSSSPEKPEESPASRASQAGRLAWDPEVSPSGRDAEAGRDAEAGRDAEAGRDAETGRGGEVGRGGEVGRDEKPRRPFSASSAGSTAASGDIYVRLEEDMDSERNYENMNLRAAYIHALGDLLQNIGVMIASALIWWRPDWAIADPICTFIFSIFVLFTTLSILKEALNVLMEGTPVGIDARALQEDLLLLPGVVEVHDLHVWSLSVGKPSLACHVVVENEDVARSVLRKATVLCQRKYAILHTTIQTDFSSDKRTCETEAHQKCSDPMKVFRR.

Residues 1–472 (MPFSCFVFSQ…ETGTQRARRK (472 aa)) are Cytoplasmic-facing. The segment covering 82–91 (VLSSRGDESV) has biased composition (basic and acidic residues). Disordered regions lie at residues 82–104 (VLSSRGDESVRSPQGRQVHSPGF), 205–227 (MKEIPSPRSRSPSDPDSSSRPCA), and 255–329 (SSSC…SSAS). 2 stretches are compositionally biased toward low complexity: residues 210-225 (SPRSRSPSDPDSSSRP) and 255-266 (SSSCCSRSNSSS). Residues 303 to 322 (VHERRAEATCCAPRDRHGGD) are compositionally biased toward basic and acidic residues. Residues 473–493 (LVMASMVCCVFMFVEIVAGVL) traverse the membrane as a helical segment. At 494 to 502 (ANSLALMTD) the chain is on the vacuolar side. Residues 503–523 (ASHLLSDLCAFLISLFALWVS) traverse the membrane as a helical segment. Topologically, residues 524 to 539 (ELKGNPSMSFGYHRAE) are cytoplasmic. The helical transmembrane segment at 540 to 560 (ILGALLSVFLIWVLTAVLIYA) threads the bilayer. The Vacuolar portion of the chain corresponds to 561-573 (ACFRLVDPPQVDG). Residues 574–594 (ELMFWTALLGTLANLFMTHIL) traverse the membrane as a helical segment. At 595-737 (KVHSHGIGQV…YENMNLRAAY (143 aa)) the chain is on the cytoplasmic side. The disordered stretch occupies residues 621–707 (LQASSSSPEK…RPFSASSAGS (87 aa)). The span at 656–680 (RDAEAGRDAEAGRDAEAGRDAETGR) shows a compositional bias: basic and acidic residues. A helical transmembrane segment spans residues 738–758 (IHALGDLLQNIGVMIASALIW). Topologically, residues 759–762 (WRPD) are vacuolar. Residues 763–783 (WAIADPICTFIFSIFVLFTTL) form a helical membrane-spanning segment. The Cytoplasmic segment spans residues 784 to 896 (SILKEALNVL…CSDPMKVFRR (113 aa)).

The protein belongs to the cation diffusion facilitator (CDF) transporter (TC 2.A.4) family. SLC30A subfamily.

Its subcellular location is the vacuole membrane. The protein resides in the cytoplasmic vesicle membrane. In terms of biological role, vacuolar zinc transporter that is probably involved in the transfer of zinc ions from the cytosol to the vacuole for intracellular storage. Plays an essential role in extracellular zinc tolerance. The sequence is that of Vacuolar zinc transporter TgZnT from Toxoplasma gondii (strain ATCC 50853 / GT1).